A 206-amino-acid chain; its full sequence is Ribosomal RNA small subunit methyltransferase G (206 aa).

Residues G74, L79, 125-126 (VE), and R140 each bind S-adenosyl-L-methionine.

The protein belongs to the methyltransferase superfamily. RNA methyltransferase RsmG family.

It localises to the cytoplasm. The catalysed reaction is guanosine(527) in 16S rRNA + S-adenosyl-L-methionine = N(7)-methylguanosine(527) in 16S rRNA + S-adenosyl-L-homocysteine. Functionally, specifically methylates the N7 position of guanine in position 527 of 16S rRNA. The polypeptide is Ribosomal RNA small subunit methyltransferase G (Shewanella frigidimarina (strain NCIMB 400)).